Consider the following 279-residue polypeptide: Secreted RxLR effector protein 152 (279 aa).

The N-terminal stretch at 1–22 (MRNGSVLFGLFFIGHSCSVLLA) is a signal peptide. Positions 47–62 (RTLQADDSERTLAEER) match the RxLR-dEER motif.

It belongs to the RxLR effector family.

It is found in the secreted. It localises to the host nucleus. Its function is as follows. Secreted effector that completely suppresses the host cell death induced by cell death-inducing proteins. The protein is Secreted RxLR effector protein 152 of Plasmopara viticola (Downy mildew of grapevine).